The sequence spans 539 residues: Protein Wnt-4 (539 aa).

The first 21 residues, M1–G21, serve as a signal peptide directing secretion. The interval Q34–I77 is disordered. A compositionally biased stretch (low complexity) spans Q51–N74. Residues N74 and N284 are each glycosylated (N-linked (GlcNAc...) asparagine). 5 disulfides stabilise this stretch: C274/C285, C322/C330, C332/C349, C397/C411, and C399/C406. A lipid anchor (O-palmitoleoyl serine; by PORCN) is attached at S403. N419 is a glycosylation site (N-linked (GlcNAc...) asparagine). Residues A436 to S463 are disordered. The span at Q439–S448 shows a compositional bias: low complexity. Basic residues predominate over residues R449–P460. 6 disulfides stabilise this stretch: C478–C497, C486–C492, C496–C538, C512–C529, C514–C526, and C521–C522.

This sequence belongs to the Wnt family. In terms of processing, palmitoleoylated by porcupine. The lipid group functions as a sorting signal, targeting the ligand to polarized vesicles that transport Wnt4 to unique sites at the cell surface. Depalmitoleoylated by notum, leading to inhibit Wnt signaling pathway.

It localises to the secreted. It is found in the extracellular space. The protein localises to the extracellular matrix. Its function is as follows. Binds as a ligand to a family of frizzled seven-transmembrane receptors and acts through a cascade of genes on the nucleus. Acts downstream of homeotic complex genes in the visceral mesoderm and is required for embryonic segmentation. Also required for cell movement and FAK regulation during ovarian morphogenesis. This Drosophila melanogaster (Fruit fly) protein is Protein Wnt-4 (Wnt4).